We begin with the raw amino-acid sequence, 373 residues long: D-alanine--D-alanine ligase (373 aa).

The ATP-grasp domain maps to 165–369 (KRLAREAGIP…FGDLVSALIA (205 aa)). 192–247 (KERLGLPVFVKPARGGSSIGISKVDSWEEFDAAIDLAFSNDNKVIVEAMIHGAEVE) is a binding site for ATP. Residues D324, E336, and N338 each coordinate Mg(2+).

The protein belongs to the D-alanine--D-alanine ligase family. It depends on Mg(2+) as a cofactor. Mn(2+) serves as cofactor.

Its subcellular location is the cytoplasm. The catalysed reaction is 2 D-alanine + ATP = D-alanyl-D-alanine + ADP + phosphate + H(+). It functions in the pathway cell wall biogenesis; peptidoglycan biosynthesis. In terms of biological role, cell wall formation. The sequence is that of D-alanine--D-alanine ligase from Corynebacterium jeikeium (strain K411).